Consider the following 434-residue polypeptide: Putative B3 domain-containing protein Os04g0347400 (434 aa).

3 DNA-binding regions (TF-B3) span residues 27-124 (SFHK…FDTT), 150-246 (KPQF…FGIN), and 326-432 (WIKK…DRVE).

Its subcellular location is the nucleus. This is Putative B3 domain-containing protein Os04g0347400 from Oryza sativa subsp. japonica (Rice).